Consider the following 317-residue polypeptide: Acetyl-coenzyme A carboxylase carboxyl transferase subunit alpha (317 aa).

The CoA carboxyltransferase C-terminal domain maps to 40–293 (LEGRVRDAMV…ETVIGDALKE (254 aa)).

It belongs to the AccA family. As to quaternary structure, acetyl-CoA carboxylase is a heterohexamer composed of biotin carboxyl carrier protein (AccB), biotin carboxylase (AccC) and two subunits each of ACCase subunit alpha (AccA) and ACCase subunit beta (AccD).

The protein resides in the cytoplasm. It carries out the reaction N(6)-carboxybiotinyl-L-lysyl-[protein] + acetyl-CoA = N(6)-biotinyl-L-lysyl-[protein] + malonyl-CoA. It participates in lipid metabolism; malonyl-CoA biosynthesis; malonyl-CoA from acetyl-CoA: step 1/1. Its function is as follows. Component of the acetyl coenzyme A carboxylase (ACC) complex. First, biotin carboxylase catalyzes the carboxylation of biotin on its carrier protein (BCCP) and then the CO(2) group is transferred by the carboxyltransferase to acetyl-CoA to form malonyl-CoA. The polypeptide is Acetyl-coenzyme A carboxylase carboxyl transferase subunit alpha (Rhizobium meliloti (strain 1021) (Ensifer meliloti)).